Here is a 253-residue protein sequence, read N- to C-terminus: Isopentenyl-diphosphate delta-isomerase IDI1 (253 aa).

Residue K61 participates in substrate binding. The Mg(2+) site is built by H65 and H76. The Nudix hydrolase domain occupies L74 to L224. 2 residues coordinate substrate: Q94 and K99. The active site involves C111. Position 112 (S112) interacts with substrate. The short motif at S112 to G145 is the Nudix box element. Positions 174 and 176 each coordinate Mg(2+). The active site involves E176.

This sequence belongs to the IPP isomerase type 1 family. Mg(2+) serves as cofactor.

It carries out the reaction isopentenyl diphosphate = dimethylallyl diphosphate. Its pathway is isoprenoid biosynthesis; dimethylallyl diphosphate biosynthesis; dimethylallyl diphosphate from isopentenyl diphosphate: step 1/1. Isopentenyl-diphosphate delta-isomerase; part of the second module of ergosterol biosynthesis pathway that includes the middle steps of the pathway. IDI1 catalyzes the 1,3-allylic rearrangement of isopentenyl (IPP) to its highly electrophilic allylic isomer, dimethylallyl diphosphate (DMAPP). The second module is carried out in the vacuole and involves the formation of farnesyl diphosphate, which is also an important intermediate in the biosynthesis of ubiquinone, dolichol, heme and prenylated proteins. Activity by the mevalonate kinase ERG12 (FG05912) first converts mevalonate into 5-phosphomevalonate. 5-phosphomevalonate is then further converted to 5-diphosphomevalonate by the phosphomevalonate kinase ERG8 (FG09764). The diphosphomevalonate decarboxylase ERG19 (FG10424) then produces isopentenyl diphosphate. The isopentenyl-diphosphate delta-isomerase IDI1 (FG09722) then catalyzes the 1,3-allylic rearrangement of the homoallylic substrate isopentenyl (IPP) to its highly electrophilic allylic isomer, dimethylallyl diphosphate (DMAPP). Finally the farnesyl diphosphate synthase ERG20 (FG06784) catalyzes the sequential condensation of isopentenyl pyrophosphate with dimethylallyl pyrophosphate, and then with the resultant geranylpyrophosphate to the ultimate product farnesyl pyrophosphate. The protein is Isopentenyl-diphosphate delta-isomerase IDI1 of Gibberella zeae (strain ATCC MYA-4620 / CBS 123657 / FGSC 9075 / NRRL 31084 / PH-1) (Wheat head blight fungus).